Here is a 433-residue protein sequence, read N- to C-terminus: Serine hydroxymethyltransferase (433 aa).

Residues L127 and 131-133 (GHL) each bind (6S)-5,6,7,8-tetrahydrofolate. Position 236 is an N6-(pyridoxal phosphate)lysine (K236).

Belongs to the SHMT family. Homodimer. It depends on pyridoxal 5'-phosphate as a cofactor.

Its subcellular location is the cytoplasm. The enzyme catalyses (6R)-5,10-methylene-5,6,7,8-tetrahydrofolate + glycine + H2O = (6S)-5,6,7,8-tetrahydrofolate + L-serine. It participates in one-carbon metabolism; tetrahydrofolate interconversion. Its pathway is amino-acid biosynthesis; glycine biosynthesis; glycine from L-serine: step 1/1. In terms of biological role, catalyzes the reversible interconversion of serine and glycine with tetrahydrofolate (THF) serving as the one-carbon carrier. This reaction serves as the major source of one-carbon groups required for the biosynthesis of purines, thymidylate, methionine, and other important biomolecules. Also exhibits THF-independent aldolase activity toward beta-hydroxyamino acids, producing glycine and aldehydes, via a retro-aldol mechanism. This is Serine hydroxymethyltransferase from Corynebacterium urealyticum (strain ATCC 43042 / DSM 7109).